A 156-amino-acid polypeptide reads, in one-letter code: MKKEVIYLTKEGYEKLKTELDNLKQKLMFEIAERIKEARELGDLSENSEYQEAKNEQGRIAARINELENMLSKAEVIEGLDTNVINIGNWVIIKNLETGEEKTIQIVTPHEADVFNNKISFESPIGRILVGKKVGEVVKIKAPKGVFKYQILGIKV.

The stretch at 8–75 (LTKEGYEKLK…ELENMLSKAE (68 aa)) forms a coiled coil.

Belongs to the GreA/GreB family.

Functionally, necessary for efficient RNA polymerase transcription elongation past template-encoded arresting sites. The arresting sites in DNA have the property of trapping a certain fraction of elongating RNA polymerases that pass through, resulting in locked ternary complexes. Cleavage of the nascent transcript by cleavage factors such as GreA or GreB allows the resumption of elongation from the new 3'terminus. GreA releases sequences of 2 to 3 nucleotides. The protein is Transcription elongation factor GreA of Thermosipho melanesiensis (strain DSM 12029 / CIP 104789 / BI429).